Consider the following 425-residue polypeptide: CinA-like protein (425 aa).

It belongs to the CinA family.

This is CinA-like protein from Trichodesmium erythraeum (strain IMS101).